We begin with the raw amino-acid sequence, 247 residues long: 3-deoxy-manno-octulosonate cytidylyltransferase (247 aa).

Belongs to the KdsB family.

It localises to the cytoplasm. It carries out the reaction 3-deoxy-alpha-D-manno-oct-2-ulosonate + CTP = CMP-3-deoxy-beta-D-manno-octulosonate + diphosphate. Its pathway is nucleotide-sugar biosynthesis; CMP-3-deoxy-D-manno-octulosonate biosynthesis; CMP-3-deoxy-D-manno-octulosonate from 3-deoxy-D-manno-octulosonate and CTP: step 1/1. The protein operates within bacterial outer membrane biogenesis; lipopolysaccharide biosynthesis. Its function is as follows. Activates KDO (a required 8-carbon sugar) for incorporation into bacterial lipopolysaccharide in Gram-negative bacteria. This chain is 3-deoxy-manno-octulosonate cytidylyltransferase, found in Rhodopseudomonas palustris (strain BisA53).